A 72-amino-acid chain; its full sequence is Translation initiation factor IF-1 2 (72 aa).

Residues 1-72 (MAKEDAIEVD…KRGRITYRMK (72 aa)) enclose the S1-like domain.

Belongs to the IF-1 family. Component of the 30S ribosomal translation pre-initiation complex which assembles on the 30S ribosome in the order IF-2 and IF-3, IF-1 and N-formylmethionyl-tRNA(fMet); mRNA recruitment can occur at any time during PIC assembly.

Its subcellular location is the cytoplasm. In terms of biological role, one of the essential components for the initiation of protein synthesis. Stabilizes the binding of IF-2 and IF-3 on the 30S subunit to which N-formylmethionyl-tRNA(fMet) subsequently binds. Helps modulate mRNA selection, yielding the 30S pre-initiation complex (PIC). Upon addition of the 50S ribosomal subunit IF-1, IF-2 and IF-3 are released leaving the mature 70S translation initiation complex. The polypeptide is Translation initiation factor IF-1 2 (Nitratidesulfovibrio vulgaris (strain DP4) (Desulfovibrio vulgaris)).